The chain runs to 382 residues: MQDAAPRLTFTLRDEERLMMKIGVFVPIGNNGWLISTHAPQYMPTFELNKAIVQKAEHYHFDFALSMIKLRGFGGKTEFWDHNLESFTLMAGLAAVTSRIQIYATAATLTLPPAIVARMAATIDSISGGRFGVNLVTGWQKPEYEQMGIWPGDDYFSRRYDYLTEYVQVLRDLWGTGKSDFKGDFFTMNDCRVSPQPSVPMKVICAGQSDAGMAFSAQYADFNFCFGKGVNTPTAFAPTAARMKQAAEQTGRDVGSYVLFMVIADETDDAARAKWEHYKAGADEEALSWLTEQSQKDTRSGTDTNVRQMADPTSAVNINMGTLVGSYASVARMLDEVASVPGAEGVLLTFDDFLSGIETFGERIQPLMQCRAHLPALTQEVA.

FMN is bound by residues Ile68–Lys69, Asn134, Glu143, Arg159–Tyr160, and Ser209.

This sequence belongs to the NtaA/SnaA/DszA monooxygenase family. RutA subfamily.

It carries out the reaction uracil + FMNH2 + NADH + O2 = (Z)-3-ureidoacrylate + FMN + NAD(+) + H2O + H(+). It catalyses the reaction thymine + FMNH2 + NADH + O2 = (Z)-2-methylureidoacrylate + FMN + NAD(+) + H2O + H(+). Catalyzes the pyrimidine ring opening between N-3 and C-4 by an unusual flavin hydroperoxide-catalyzed mechanism, adding oxygen atoms in the process to yield ureidoacrylate peracid, that immediately reacts with FMN forming ureidoacrylate and FMN-N(5)-oxide. The FMN-N(5)-oxide reacts spontaneously with NADH to produce FMN. Requires the flavin reductase RutF to regenerate FMN in vivo. This is Pyrimidine monooxygenase RutA from Escherichia coli (strain 55989 / EAEC).